A 240-amino-acid polypeptide reads, in one-letter code: UDP-2,3-diacylglucosamine hydrolase (240 aa).

Residues Asp-7, His-9, Asp-40, Asn-78, and His-113 each contribute to the Mn(2+) site. 78–79 serves as a coordination point for substrate; it reads NR. Positions 121, 159, 166, and 194 each coordinate substrate. The Mn(2+) site is built by His-194 and His-196.

This sequence belongs to the LpxH family. Mn(2+) serves as cofactor.

It is found in the cell inner membrane. The enzyme catalyses UDP-2-N,3-O-bis[(3R)-3-hydroxytetradecanoyl]-alpha-D-glucosamine + H2O = 2-N,3-O-bis[(3R)-3-hydroxytetradecanoyl]-alpha-D-glucosaminyl 1-phosphate + UMP + 2 H(+). It functions in the pathway glycolipid biosynthesis; lipid IV(A) biosynthesis; lipid IV(A) from (3R)-3-hydroxytetradecanoyl-[acyl-carrier-protein] and UDP-N-acetyl-alpha-D-glucosamine: step 4/6. In terms of biological role, hydrolyzes the pyrophosphate bond of UDP-2,3-diacylglucosamine to yield 2,3-diacylglucosamine 1-phosphate (lipid X) and UMP by catalyzing the attack of water at the alpha-P atom. Involved in the biosynthesis of lipid A, a phosphorylated glycolipid that anchors the lipopolysaccharide to the outer membrane of the cell. The protein is UDP-2,3-diacylglucosamine hydrolase of Pseudomonas putida (strain ATCC 47054 / DSM 6125 / CFBP 8728 / NCIMB 11950 / KT2440).